A 538-amino-acid polypeptide reads, in one-letter code: Retinoblastoma-binding protein 5 (538 aa).

2 WD repeats span residues 22–63 (DCIS…KIIS) and 64–103 (AHIH…CDQR). K129 participates in a covalent cross-link: Glycyl lysine isopeptide (Lys-Gly) (interchain with G-Cter in SUMO2). 4 WD repeats span residues 148 to 188 (DDDS…LVAS), 196 to 235 (SNTT…TCGR), 249 to 291 (VNRT…KILH), and 293 to 331 (TRGE…NWSA). T252 bears the Phosphothreonine; by CDK1 mark. The interval 330 to 366 (SAFAPDFKELDENVEYEERESEFDIEDEDKSEPEQTG) is interaction with ASH2L. Over residues 344-360 (EYEERESEFDIEDEDKS) the composition is skewed to acidic residues. Residues 344 to 377 (EYEERESEFDIEDEDKSEPEQTGADAAEDEEVDV) are disordered. S350 bears the Phosphoserine mark. Residues 371 to 380 (EDEEVDVTSV) form an interaction with WDR5 region. S388 and S389 each carry phosphoserine. The disordered stretch occupies residues 408 to 519 (VEDPEENPYG…LPLEGSTKGK (112 aa)). Basic residues predominate over residues 479–490 (SKKKQAGRPKGS). Residues 491-510 (KGKEKDSPFKPKLYKGDRGL) are compositionally biased toward basic and acidic residues. S497 is modified (phosphoserine; by CDK1). Phosphoserine is present on S525.

In terms of assembly, component of the SET1 complex, at least composed of the catalytic subunit (SETD1A or SETD1B), WDR5, WDR82, RBBP5, ASH2L/ASH2, CXXC1/CFP1, HCFC1 and DPY30. Core component of several methyltransferase-containing complexes including MLL1/MLL, MLL2/3 (also named ASCOM complex) and MLL4/WBP7. Each complex is at least composed of ASH2L, RBBP5, WDR5, DPY30, one or more specific histone methyltransferases (KMT2A/MLL1, KMT2D/MLL2, KMT2C/MLL3 and KMT2B/MLL4), and the facultative components PAGR1, BACC1, CHD8, E2F6, HCFC1, HCFC2, HSP70, INO80C, KDM6A, KANSL1, LAS1L, MAX, MCRS1, MEN1, MGA, MYST1/MOF, NCOA6, PAXIP1/PTIP, PELP1, PHF20, PRP31, RING2, RUVB1/TIP49A, RUVB2/TIP49B, SENP3, TAF1, TAF4, TAF6, TAF7, TAF9, TEX10 and alpha- and beta-tubulin. Component of a histone methylation complex composed of at least ZNF335, RBBP5, ASH2L and WDR5; the complex may have histone H3-specific methyltransferase activity, however does not have specificity for 'Lys-4' of histone H3. Interacts with ZNF335. Interacts with ASH2L; the interaction is direct. Interacts with WDR5; the interaction is direct. Components of the ZNF335-RBBP5-ASH2L-WDR5 histone methylation complex may associate with components of a nuclear receptor-mediated transcription complex to form a complex at least composed of ZNF335, HCFC1, CCAR2, EMSY, MKI67, RBBP5, ASH2L and WDR5. Within this complex interacts with EMSY. Found in a complex with RBBP5, ASH2L, DPY30, KMT2A, KMT2D and WDR5. Interacts with SETD1A. Interacts with WDR82.

It localises to the nucleus. In terms of biological role, in embryonic stem (ES) cells, plays a crucial role in the differentiation potential, particularly along the neural lineage, regulating gene induction and H3 'Lys-4' methylation at key developmental loci, including that mediated by retinoic acid. Does not affect ES cell self-renewal. Component or associated component of some histone methyltransferase complexes which regulates transcription through recruitment of those complexes to gene promoters. As part of the MLL1/MLL complex, involved in mono-, di- and trimethylation at 'Lys-4' of histone H3. Histone H3 'Lys-4' methylation represents a specific tag for epigenetic transcriptional activation. In association with ASH2L and WDR5, stimulates the histone methyltransferase activities of KMT2A, KMT2B, KMT2C, KMT2D, SETD1A and SETD1B. This is Retinoblastoma-binding protein 5 (Rbbp5) from Mus musculus (Mouse).